A 188-amino-acid polypeptide reads, in one-letter code: UPF0301 protein Mmwyl1_0539 (188 aa).

It belongs to the UPF0301 (AlgH) family.

This Marinomonas sp. (strain MWYL1) protein is UPF0301 protein Mmwyl1_0539.